A 92-amino-acid chain; its full sequence is Large ribosomal subunit protein eL43 (92 aa).

Zn(2+)-binding residues include Cys-39, Cys-42, Cys-57, and Cys-60.

It belongs to the eukaryotic ribosomal protein eL43 family. In terms of assembly, component of the large ribosomal subunit. Mature ribosomes consist of a small (40S) and a large (60S) subunit. The 40S subunit contains 32 different proteins and 1 molecule of RNA (18S). The 60S subunit contains 45 different proteins and 3 molecules of RNA (25S, 5.8S and 5S). Zn(2+) serves as cofactor.

The protein resides in the cytoplasm. In terms of biological role, component of the ribosome, a large ribonucleoprotein complex responsible for the synthesis of proteins in the cell. The small ribosomal subunit (SSU) binds messenger RNAs (mRNAs) and translates the encoded message by selecting cognate aminoacyl-transfer RNA (tRNA) molecules. The large subunit (LSU) contains the ribosomal catalytic site termed the peptidyl transferase center (PTC), which catalyzes the formation of peptide bonds, thereby polymerizing the amino acids delivered by tRNAs into a polypeptide chain. The nascent polypeptides leave the ribosome through a tunnel in the LSU and interact with protein factors that function in enzymatic processing, targeting, and the membrane insertion of nascent chains at the exit of the ribosomal tunnel. This Candida albicans (strain SC5314 / ATCC MYA-2876) (Yeast) protein is Large ribosomal subunit protein eL43.